We begin with the raw amino-acid sequence, 243 residues long: Segregation and condensation protein A (243 aa).

The protein belongs to the ScpA family. As to quaternary structure, component of a cohesin-like complex composed of ScpA, ScpB and the Smc homodimer, in which ScpA and ScpB bind to the head domain of Smc. The presence of the three proteins is required for the association of the complex with DNA.

It localises to the cytoplasm. Its function is as follows. Participates in chromosomal partition during cell division. May act via the formation of a condensin-like complex containing Smc and ScpB that pull DNA away from mid-cell into both cell halves. The polypeptide is Segregation and condensation protein A (Staphylococcus aureus (strain NCTC 8325 / PS 47)).